The chain runs to 198 residues: MRAFVLRARSAPTNSQLLLESVGQEAHTEILAHTLMNAIFVAQSHRDDVIVHLVLESTQDFSRTISFTSSEITNVGGFHEQALLTKIARALDLSQGMTKEQERKVEPGITVRTVSFEKLVQELAEDYQLFMMDKKGTNIREQEFEGNPCFLLTDHIPMPKKSFNSLKRLGATKISLGPKMLFASQCVVLIHNELDINM.

Residues Met-132 and Cys-186 each contribute to the S-adenosyl-L-methionine site.

The protein belongs to the methyltransferase superfamily. TrmY family.

The protein localises to the cytoplasm. The protein is Putative pseudouridine methyltransferase of Photobacterium profundum (strain SS9).